We begin with the raw amino-acid sequence, 473 residues long: Photosystem II CP43 reaction center protein (473 aa).

A propeptide spanning residues 1–14 (MKTLYSLRRFYHVE) is cleaved from the precursor. N-acetylthreonine is present on Thr-15. At Thr-15 the chain carries Phosphothreonine. Transmembrane regions (helical) follow at residues 69-93 (LFEVAHFVPEKPMYEQGLILLPHLA), 134-155 (LLGPETLEESFPFFGYVWKDRN), 178-200 (KALYFGGVYDTWAPGGGDVRKIT), 255-275 (KPFAWARRAFVWSGEAYLSYS), and 291-312 (WFNNTAYPSEFYGPTGPEASQA). Position 367 (Glu-367) interacts with [CaMn4O5] cluster. The chain crosses the membrane as a helical span at residues 447–471 (RARAAAAGFEKGIDRDFEPVLSMTP).

The protein belongs to the PsbB/PsbC family. PsbC subfamily. PSII is composed of 1 copy each of membrane proteins PsbA, PsbB, PsbC, PsbD, PsbE, PsbF, PsbH, PsbI, PsbJ, PsbK, PsbL, PsbM, PsbT, PsbX, PsbY, PsbZ, Psb30/Ycf12, at least 3 peripheral proteins of the oxygen-evolving complex and a large number of cofactors. It forms dimeric complexes. Binds multiple chlorophylls and provides some of the ligands for the Ca-4Mn-5O cluster of the oxygen-evolving complex. It may also provide a ligand for a Cl- that is required for oxygen evolution. PSII binds additional chlorophylls, carotenoids and specific lipids. serves as cofactor.

The protein resides in the plastid. Its subcellular location is the chloroplast thylakoid membrane. Its function is as follows. One of the components of the core complex of photosystem II (PSII). It binds chlorophyll and helps catalyze the primary light-induced photochemical processes of PSII. PSII is a light-driven water:plastoquinone oxidoreductase, using light energy to abstract electrons from H(2)O, generating O(2) and a proton gradient subsequently used for ATP formation. The protein is Photosystem II CP43 reaction center protein of Ipomoea purpurea (Common morning glory).